The sequence spans 395 residues: MALQAATSFLPSALSARKEGAAKDSAFFGVRLADGLKLDATSLGLRTKRVNTSSVAIRAQAAAVSAPTATPASPAGKKTVRTGNAIITGASSGLGLATAKALAESGKWHVIMACRDYLKTARAARAAGMPKGSYTIVHLDLASLDSVRQFVKNVRQLDMPIDVVVCNAAVYQPTAKEPSFTADGFEMSVGVNHLGHFLLARELLEDLKASDYPSKRLIIVGSITGNTNTLAGNVPPKANLGDLRGLAAGLNGVGSAAMIDGAEFDGAKAYKDSKVCNMLTMQEFHRRYHEETGVTFASLYPGCIATTGLFREHIPLFRLLFPPFQKYITKGYVSEEEAGKRLAQVVSEPSLTKSGVYWSWNKNSASFENQLSEEASDTEKARKVWELSEKLVGLA.

The transit peptide at 1–59 directs the protein to the chloroplast; that stretch reads MALQAATSFLPSALSARKEGAAKDSAFFGVRLADGLKLDATSLGLRTKRVNTSSVAIRA.

It belongs to the short-chain dehydrogenases/reductases (SDR) family. POR subfamily.

The protein resides in the plastid. It localises to the chloroplast. It catalyses the reaction chlorophyllide a + NADP(+) = protochlorophyllide a + NADPH + H(+). It functions in the pathway porphyrin-containing compound metabolism; chlorophyll biosynthesis. Its function is as follows. Phototransformation of protochlorophyllide (Pchlide) to chlorophyllide (Chlide). The protein is Protochlorophyllide reductase B, chloroplastic (PORB) of Hordeum vulgare (Barley).